The chain runs to 711 residues: Polyribonucleotide nucleotidyltransferase (711 aa).

Mg(2+)-binding residues include D486 and D492. One can recognise a KH domain in the interval 553–612 (PRIHTIKINPDKIKDVIGKGGSVIRALTEETGTTIEIEDDGTVKIAATDGEKAKHAIRRI). The S1 motif domain maps to 622–690 (GRVYTGKVTR…RQGRIRLSIK (69 aa)). The segment at 689 to 711 (IKEATEQSQPAAAPEAPAAEQGE) is disordered. Residues 694-711 (EQSQPAAAPEAPAAEQGE) are compositionally biased toward low complexity.

The protein belongs to the polyribonucleotide nucleotidyltransferase family. In terms of assembly, component of the RNA degradosome, which is a multiprotein complex involved in RNA processing and mRNA degradation. Mg(2+) is required as a cofactor.

The protein resides in the cytoplasm. The catalysed reaction is RNA(n+1) + phosphate = RNA(n) + a ribonucleoside 5'-diphosphate. Involved in mRNA degradation. Catalyzes the phosphorolysis of single-stranded polyribonucleotides processively in the 3'- to 5'-direction. The polypeptide is Polyribonucleotide nucleotidyltransferase (Escherichia coli (strain ATCC 8739 / DSM 1576 / NBRC 3972 / NCIMB 8545 / WDCM 00012 / Crooks)).